The primary structure comprises 142 residues: Large ribosomal subunit protein uL11 (142 aa).

This sequence belongs to the universal ribosomal protein uL11 family. In terms of assembly, part of the ribosomal stalk of the 50S ribosomal subunit. Interacts with L10 and the large rRNA to form the base of the stalk. L10 forms an elongated spine to which L12 dimers bind in a sequential fashion forming a multimeric L10(L12)X complex. In terms of processing, one or more lysine residues are methylated.

In terms of biological role, forms part of the ribosomal stalk which helps the ribosome interact with GTP-bound translation factors. The sequence is that of Large ribosomal subunit protein uL11 from Pectobacterium carotovorum subsp. carotovorum (strain PC1).